Consider the following 230-residue polypeptide: Ribosomal RNA small subunit methyltransferase G (230 aa).

S-adenosyl-L-methionine is bound by residues G93, L98, 144-145, and R158; that span reads IE.

The protein belongs to the methyltransferase superfamily. RNA methyltransferase RsmG family.

The protein localises to the cytoplasm. The enzyme catalyses guanosine(527) in 16S rRNA + S-adenosyl-L-methionine = N(7)-methylguanosine(527) in 16S rRNA + S-adenosyl-L-homocysteine. In terms of biological role, specifically methylates the N7 position of guanine in position 527 of 16S rRNA. The sequence is that of Ribosomal RNA small subunit methyltransferase G from Bordetella parapertussis (strain 12822 / ATCC BAA-587 / NCTC 13253).